We begin with the raw amino-acid sequence, 1166 residues long: Zinc finger CCHC domain-containing protein 2 (1166 aa).

Disordered regions lie at residues 1–85 (MLRM…GGHA), 205–240 (RAEGSRGSVEDEPSGDGEQDAEKDGPGPEGSGCAKL), 550–668 (SSAD…ARFS), and 904–982 (PASF…ISAV). Pro residues predominate over residues 43–64 (PPPPPTGLPRGPPPPPSPPRGL). A compositionally biased stretch (low complexity) spans 65–76 (EPPVASGPTAGA). Acidic residues predominate over residues 214 to 223 (EDEPSGDGEQ). Positions 572–587 (PQVEKEKVKKTEDRLN) are enriched in basic and acidic residues. The segment covering 624-633 (SSESYSSPSS) has biased composition (low complexity). Basic and acidic residues predominate over residues 634–653 (PRHDGRESLESEEEKDRDSD). Residues 919-947 (LPTQNSSALNAATSAQPASTGISPSQSTV) show a composition bias toward polar residues. Residues 949 to 963 (PAVPTHTPGPAPSPS) are compositionally biased toward pro residues. Residues 964 to 982 (PALTHSTAQSDSTSYISAV) are compositionally biased toward polar residues. The segment at 1119–1136 (VSCYNCGVSGHYAQDCKQ) adopts a CCHC-type zinc-finger fold.

The polypeptide is Zinc finger CCHC domain-containing protein 2 (Zcchc2) (Mus musculus (Mouse)).